A 343-amino-acid chain; its full sequence is F-box/kelch-repeat protein At3g08810 (343 aa).

Residues 1–15 (MSYPERKRKRSRWSK) show a composition bias toward basic residues. The segment at 1–25 (MSYPERKRKRSRWSKPHSTQNPSPS) is disordered. The F-box domain occupies 20–66 (QNPSPSLPDDVLLSIFARVSRLYYPTLSHVSESFRSLLASPELYKAR). 3 Kelch repeats span residues 134 to 181 (DIYN…VRDG), 183 to 224 (QGGH…LPDS), and 225 to 271 (YCVI…VILA).

The polypeptide is F-box/kelch-repeat protein At3g08810 (Arabidopsis thaliana (Mouse-ear cress)).